Consider the following 92-residue polypeptide: Putative septation protein SpoVG (92 aa).

This sequence belongs to the SpoVG family.

Could be involved in septation. The protein is Putative septation protein SpoVG of Thermoanaerobacter sp. (strain X514).